The following is a 264-amino-acid chain: Thymidylate synthase (264 aa).

Arginine 21 is a dUMP binding site. Histidine 51 is a (6R)-5,10-methylene-5,6,7,8-tetrahydrofolate binding site. Arginine 126–arginine 127 contacts dUMP. The active-site Nucleophile is cysteine 146. DUMP is bound by residues arginine 166–aspartate 169, asparagine 177, and histidine 207–tyrosine 209. Aspartate 169 is a (6R)-5,10-methylene-5,6,7,8-tetrahydrofolate binding site. Alanine 263 contacts (6R)-5,10-methylene-5,6,7,8-tetrahydrofolate.

It belongs to the thymidylate synthase family. Bacterial-type ThyA subfamily. In terms of assembly, homodimer.

Its subcellular location is the cytoplasm. The catalysed reaction is dUMP + (6R)-5,10-methylene-5,6,7,8-tetrahydrofolate = 7,8-dihydrofolate + dTMP. It participates in pyrimidine metabolism; dTTP biosynthesis. Its function is as follows. Catalyzes the reductive methylation of 2'-deoxyuridine-5'-monophosphate (dUMP) to 2'-deoxythymidine-5'-monophosphate (dTMP) while utilizing 5,10-methylenetetrahydrofolate (mTHF) as the methyl donor and reductant in the reaction, yielding dihydrofolate (DHF) as a by-product. This enzymatic reaction provides an intracellular de novo source of dTMP, an essential precursor for DNA biosynthesis. This chain is Thymidylate synthase, found in Cytophaga hutchinsonii (strain ATCC 33406 / DSM 1761 / CIP 103989 / NBRC 15051 / NCIMB 9469 / D465).